The chain runs to 408 residues: Glutamate N-acetyltransferase (408 aa).

Thr-150, Lys-176, Thr-189, Glu-271, Asn-403, and Thr-408 together coordinate substrate. Residue Thr-189 is the Nucleophile of the active site.

This sequence belongs to the ArgJ family. Heterotetramer of two alpha and two beta chains.

Its subcellular location is the cytoplasm. It carries out the reaction N(2)-acetyl-L-ornithine + L-glutamate = N-acetyl-L-glutamate + L-ornithine. It participates in amino-acid biosynthesis; L-arginine biosynthesis; L-ornithine and N-acetyl-L-glutamate from L-glutamate and N(2)-acetyl-L-ornithine (cyclic): step 1/1. In terms of biological role, catalyzes the transfer of the acetyl group from N(2)-acetylornithine to glutamate, forming N-acetylglutamate and L-ornithine. The protein is Glutamate N-acetyltransferase of Methanococcus maripaludis (strain C7 / ATCC BAA-1331).